A 910-amino-acid chain; its full sequence is MDDRGRRCCTHSGVIALDIEAKWQNAWDRDGIFVPKMDGRKKFMITVPWPYTNGSLHVGHGRTYTLGDIIARYKRSRNYNVLFPMGFHQSGTPILAFSERIRAGDRSTIDLYTSYLKEYGEKDIDALIESFKDPKNIADYFSNAIINDFKHLGYSIDWTRRFTSADEFYQKFVQWQFRRLNEKGLVKQGRYPILYSLEDDNAVGEDDIKDGDTDKVTIEEYTAIFFRGKSFDLIAASLRPETIYGITNIWVNPDVKYVKVKISGRMAVVSEECSTKLKFQGNEIEVAGEASVQEIQKQTYTTPAGKEVKVYQADFVDPDNGTGIVYSVPSHSVYDYVYYRKKRGKDFPVIIEAPMKMKDIESKYDLETEEGREEATKDLYRNEFYYGKLVDSGPYTGMTVREAREAVKRDLISSGNAFTFYETSRHAVTRSGSKVIVAVLPDQWFLDYSQPWLKDLGHTMINTMTMHPEVYRNVMNDAIDWLKERPCARRRGLGTRLPFDDRWVIESLSDSTIYPAVYTNSIPLRSLYETGKLDDDAITRIFMNGEPKNEDESEAKRQFEYWYPVDIRLTAIPHISNHLSFYVLNHAAIFPKEKWPAGLIISGLVVSNGAKISKSKGNVVSLLEIAKKYSADIYRLYVAVQADISSTMDWNETDLASITRRFNEFKDLMAGFKQDTSDLTFEEAWFVARFSVRLRQFMESMDRYQIRDAYINIFYGVLNDLRYLSSRGGDVNRALTPVIADWLRALMPVIPHHAEEYWHSYVSDTYVSVDPFDENFQDRYERTVRRFGMTCDQMYSAMDYVEKVLQDVKNIMQVTGIEPKSVEITVANADVVRAAQEFLNNSVSGQSKKYMQYLAKRRKDIMIYGFDEYDVLQRNQVYLSKQIGCPVRIERGDVINGKIALPGKPVIYIS.

The 'HIGH' region motif lies at 50–60; that stretch reads PYTNGSLHVGH. The short motif at 611–615 is the 'KMSKS' region element; the sequence is KISKS. Lys614 serves as a coordination point for ATP.

The protein belongs to the class-I aminoacyl-tRNA synthetase family.

The protein resides in the cytoplasm. It carries out the reaction tRNA(Leu) + L-leucine + ATP = L-leucyl-tRNA(Leu) + AMP + diphosphate. This Thermoplasma acidophilum (strain ATCC 25905 / DSM 1728 / JCM 9062 / NBRC 15155 / AMRC-C165) protein is Leucine--tRNA ligase.